The chain runs to 149 residues: Basic phospholipase A2 homolog MitTx-beta (149 aa).

The first 30 residues, 1-30 (MDKMNPAHLLVLAAVCVSLLGASSIPPQAL), serve as a signal peptide directing secretion. Intrachain disulfides connect C41/C100, C55/C148, C57/C73, C72/C130, C79/C123, C89/C116, and C109/C121.

It belongs to the phospholipase A2 family. Group I subfamily. K49 sub-subfamily. Heterodimer of an alpha (Kunitz-type) and a beta (phospholipase A2 homolog) chains; non-covalently-linked. As to expression, expressed by the venom gland.

It localises to the secreted. Its function is as follows. Heterodimer: MitTx, a heteromeric complex between Kunitz- and phospholipase-A2-like proteins, potently, persistently and selectively activates rat and chicken acid-sensing ion channel ASIC1. Both alternatively spliced rat isoforms ASIC1a and ASIC1b are activated, with a higher potency for ASIC1a (EC(50)=9.4 nM) vs ASIC1b (EC(50)=23 nM). The rat ASIC3 subtype is also sensitive to the heterodimer, but with a lower potency (EC(50)=830 nM). On rat ASIC2a, the toxin shows a very weak activation, but produces a remarkable potentiation (&gt;100-fold) of protons when the extracellular pH drops below neutrality. Moderate and weak activations are also observed on the heterotrimers Asic1a-Asic2a and Asic1a-Asic3 (expressed in CHO cells), respectively. The binding sites of the beta subunit of MitTx and the spider psalmotoxin-1 toxin overlap, explaining why these toxins are mutually exclusive. In vivo, the heterodimer elicits robust pain-related behavior in mice by activation of ASIC1 channels on capsaicin-sensitive nerve fibers. In terms of biological role, monomer: does not have phospholipase A2 activity but may maintain some lipid-binding character from its PLA2 lineage, which could aid in effecting neuronal depolarization. This is Basic phospholipase A2 homolog MitTx-beta from Micrurus tener tener (Texas coral snake).